The sequence spans 877 residues: Phosphoenolpyruvate carboxylase (877 aa).

Residues His138 and Lys543 contribute to the active site.

Belongs to the PEPCase type 1 family. Mg(2+) serves as cofactor.

It catalyses the reaction oxaloacetate + phosphate = phosphoenolpyruvate + hydrogencarbonate. Its function is as follows. Forms oxaloacetate, a four-carbon dicarboxylic acid source for the tricarboxylic acid cycle. This Aeromonas salmonicida (strain A449) protein is Phosphoenolpyruvate carboxylase.